A 67-amino-acid chain; its full sequence is V-type proton ATPase subunit e (67 aa).

The Lumenal portion of the chain corresponds to Met1–Gly2. Residues Gly3 to Val23 traverse the membrane as a helical segment. At Ser24 to Met35 the chain is on the cytoplasmic side. A helical membrane pass occupies residues Ser36–Leu56. Residues His57–Glu67 are Lumenal-facing.

This sequence belongs to the V-ATPase e1/e2 subunit family. V-ATPase is a heteromultimeric enzyme composed of a peripheral catalytic V1 complex (components A to H) attached to an integral membrane V0 proton pore complex (components: a, c, c', c'', d, e, f and VOA1).

The protein resides in the vacuole membrane. Functionally, subunit of the V0 complex of vacuolar(H+)-ATPase (V-ATPase), a multisubunit enzyme composed of a peripheral complex (V1) that hydrolyzes ATP and a membrane integral complex (V0) that translocates protons. V-ATPase is responsible for acidifying and maintaining the pH of intracellular compartments. This chain is V-type proton ATPase subunit e (vma9), found in Schizosaccharomyces pombe (strain 972 / ATCC 24843) (Fission yeast).